The sequence spans 318 residues: 4-diphosphocytidyl-2-C-methyl-D-erythritol kinase (318 aa).

The active site involves Lys13. Residue 101-111 coordinates ATP; the sequence is PVAGGMAGGSA. The active site involves Asp143. Positions 298–318 are disordered; the sequence is PGARLVTDDRADRPTPPQVHA.

It belongs to the GHMP kinase family. IspE subfamily.

The catalysed reaction is 4-CDP-2-C-methyl-D-erythritol + ATP = 4-CDP-2-C-methyl-D-erythritol 2-phosphate + ADP + H(+). It participates in isoprenoid biosynthesis; isopentenyl diphosphate biosynthesis via DXP pathway; isopentenyl diphosphate from 1-deoxy-D-xylulose 5-phosphate: step 3/6. Functionally, catalyzes the phosphorylation of the position 2 hydroxy group of 4-diphosphocytidyl-2C-methyl-D-erythritol. In Saccharopolyspora erythraea (strain ATCC 11635 / DSM 40517 / JCM 4748 / NBRC 13426 / NCIMB 8594 / NRRL 2338), this protein is 4-diphosphocytidyl-2-C-methyl-D-erythritol kinase.